The primary structure comprises 216 residues: MOB kinase activator 1A (216 aa).

Residue S2 is modified to N-acetylserine. Phosphothreonine is present on residues T12 and T35. The residue at position 74 (T74) is a Phosphothreonine; by STK3/MST2. Zn(2+)-binding residues include C79, C84, H161, and H166. Phosphothreonine is present on T181.

This sequence belongs to the MOB1/phocein family. As to quaternary structure, binds STK38 and STK38L. Interacts with LATS1 and LATS2. Forms a tripartite complex with STK38 and STK3/MST2. In terms of processing, phosphorylated by STK3/MST2 and STK4/MST1 and this phosphorylation enhances its binding to LATS1. As to expression, adrenal gland, bone marrow, brain, placenta, prostate, salivary gland, skeletal muscle, testis, thymus, thyroid gland, heart, spinal cord, fetal brain and fetal liver.

Its function is as follows. Activator of LATS1/2 in the Hippo signaling pathway which plays a pivotal role in organ size control and tumor suppression by restricting proliferation and promoting apoptosis. The core of this pathway is composed of a kinase cascade wherein STK3/MST2 and STK4/MST1, in complex with its regulatory protein SAV1, phosphorylates and activates LATS1/2 in complex with its regulatory protein MOB1, which in turn phosphorylates and inactivates YAP1 oncoprotein and WWTR1/TAZ. Phosphorylation of YAP1 by LATS1/2 inhibits its translocation into the nucleus to regulate cellular genes important for cell proliferation, cell death, and cell migration. Stimulates the kinase activity of STK38 and STK38L. Acts cooperatively with STK3/MST2 to activate STK38. The chain is MOB kinase activator 1A from Homo sapiens (Human).